The chain runs to 194 residues: Large ribosomal subunit protein eL15 (194 aa).

Residues 160-194 are disordered; that stretch reads RGLTSAGKKGRGLMYKGKGTEKVRPSVRANSKKAK.

Belongs to the eukaryotic ribosomal protein eL15 family.

The polypeptide is Large ribosomal subunit protein eL15 (Methanococcus maripaludis (strain C7 / ATCC BAA-1331)).